A 324-amino-acid chain; its full sequence is Galactosylgalactosylxylosylprotein 3-beta-glucuronosyltransferase 2 (324 aa).

Residues 1-2 (MK) are Cytoplasmic-facing. The chain crosses the membrane as a helical; Signal-anchor for type II membrane protein span at residues 3–23 (SALCSRFFILLPWILIVIIML). At 24-324 (DVDPRRPAPQ…YHLDTVNIEV (301 aa)) the chain is on the lumenal side. The tract at residues 50-78 (SRVPLRRSSPGRDAAEKRNESRPQLQPEP) is disordered. A glycan (N-linked (GlcNAc...) asparagine) is linked at N68. Residues 88–90 (PTY), D119, R156, R161, and 186–188 (DDD) each bind UDP-alpha-D-glucuronate. A Mn(2+)-binding site is contributed by D188. The interaction with galactose moiety of substrate glycoprotein stretch occupies residues 235–244 (WREDRPFAID). E274 serves as the catalytic Proton donor/acceptor. A glycan (N-linked (GlcNAc...) asparagine) is linked at N293. UDP-alpha-D-glucuronate is bound at residue 301–303 (HTR).

The protein belongs to the glycosyltransferase 43 family. In terms of assembly, homodimer. The cofactor is Mn(2+). As to expression, expressed in brain, but not in liver and kidney.

It is found in the golgi apparatus membrane. It catalyses the reaction 3-O-(beta-D-galactosyl-(1-&gt;3)-beta-D-galactosyl-(1-&gt;4)-beta-D-xylosyl)-L-seryl-[protein] + UDP-alpha-D-glucuronate = 3-O-(beta-D-GlcA-(1-&gt;3)-beta-D-Gal-(1-&gt;3)-beta-D-Gal-(1-&gt;4)-beta-D-Xyl)-L-seryl-[protein] + UDP + H(+). It participates in protein modification; protein glycosylation. Functionally, involved in the biosynthesis of L2/HNK-1 carbohydrate epitope on both glycolipids and glycoproteins. The chain is Galactosylgalactosylxylosylprotein 3-beta-glucuronosyltransferase 2 (B3gat2) from Mus musculus (Mouse).